The following is a 363-amino-acid chain: Holliday junction branch migration complex subunit RuvB (363 aa).

The disordered stretch occupies residues 1 to 32 (MAIQTDSFAAAPAPSSGSTRRLISAAPTSPNE). Over residues 7–18 (SFAAAPAPSSGS) the composition is skewed to low complexity. Residues 13 to 200 (APSSGSTRRL…FGIVARLEFY (188 aa)) are large ATPase domain (RuvB-L). Residues Leu39, Arg40, Gly81, Lys84, Thr85, Thr86, 147–149 (EDY), Arg190, Tyr200, and Arg237 contribute to the ATP site. Residue Thr85 participates in Mg(2+) binding. Residues 201 to 271 (TPEELVRIVT…IAELALTMLD (71 aa)) are small ATPAse domain (RuvB-S). The head domain (RuvB-H) stretch occupies residues 274 to 363 (PRGFDVMDRK…GPVGSDLFEG (90 aa)). Arg329 and Arg334 together coordinate DNA.

It belongs to the RuvB family. In terms of assembly, homohexamer. Forms an RuvA(8)-RuvB(12)-Holliday junction (HJ) complex. HJ DNA is sandwiched between 2 RuvA tetramers; dsDNA enters through RuvA and exits via RuvB. An RuvB hexamer assembles on each DNA strand where it exits the tetramer. Each RuvB hexamer is contacted by two RuvA subunits (via domain III) on 2 adjacent RuvB subunits; this complex drives branch migration. In the full resolvosome a probable DNA-RuvA(4)-RuvB(12)-RuvC(2) complex forms which resolves the HJ.

The protein resides in the cytoplasm. It catalyses the reaction ATP + H2O = ADP + phosphate + H(+). The RuvA-RuvB-RuvC complex processes Holliday junction (HJ) DNA during genetic recombination and DNA repair, while the RuvA-RuvB complex plays an important role in the rescue of blocked DNA replication forks via replication fork reversal (RFR). RuvA specifically binds to HJ cruciform DNA, conferring on it an open structure. The RuvB hexamer acts as an ATP-dependent pump, pulling dsDNA into and through the RuvAB complex. RuvB forms 2 homohexamers on either side of HJ DNA bound by 1 or 2 RuvA tetramers; 4 subunits per hexamer contact DNA at a time. Coordinated motions by a converter formed by DNA-disengaged RuvB subunits stimulates ATP hydrolysis and nucleotide exchange. Immobilization of the converter enables RuvB to convert the ATP-contained energy into a lever motion, pulling 2 nucleotides of DNA out of the RuvA tetramer per ATP hydrolyzed, thus driving DNA branch migration. The RuvB motors rotate together with the DNA substrate, which together with the progressing nucleotide cycle form the mechanistic basis for DNA recombination by continuous HJ branch migration. Branch migration allows RuvC to scan DNA until it finds its consensus sequence, where it cleaves and resolves cruciform DNA. This Leptothrix cholodnii (strain ATCC 51168 / LMG 8142 / SP-6) (Leptothrix discophora (strain SP-6)) protein is Holliday junction branch migration complex subunit RuvB.